The chain runs to 327 residues: GMP reductase (327 aa).

Residue C176 is the Thioimidate intermediate of the active site. 205-228 (IIADGGIRTHGDIAKSIRFGASMV) is an NADP(+) binding site.

This sequence belongs to the IMPDH/GMPR family. GuaC type 2 subfamily.

It catalyses the reaction IMP + NH4(+) + NADP(+) = GMP + NADPH + 2 H(+). In terms of biological role, catalyzes the irreversible NADPH-dependent deamination of GMP to IMP. It functions in the conversion of nucleobase, nucleoside and nucleotide derivatives of G to A nucleotides, and in maintaining the intracellular balance of A and G nucleotides. In Streptococcus pyogenes serotype M6 (strain ATCC BAA-946 / MGAS10394), this protein is GMP reductase.